A 393-amino-acid chain; its full sequence is Glucose-1-phosphate adenylyltransferase (393 aa).

Residues tyrosine 105, glycine 170, 185 to 186 (EK), and serine 196 each bind alpha-D-glucose 1-phosphate.

It belongs to the bacterial/plant glucose-1-phosphate adenylyltransferase family. Homotetramer.

It carries out the reaction alpha-D-glucose 1-phosphate + ATP + H(+) = ADP-alpha-D-glucose + diphosphate. It functions in the pathway glycan biosynthesis; glycogen biosynthesis. Its function is as follows. Involved in the biosynthesis of ADP-glucose, a building block required for the elongation reactions to produce glycogen. Catalyzes the reaction between ATP and alpha-D-glucose 1-phosphate (G1P) to produce pyrophosphate and ADP-Glc. The sequence is that of Glucose-1-phosphate adenylyltransferase from Clostridium perfringens (strain 13 / Type A).